Here is a 296-residue protein sequence, read N- to C-terminus: AUGMIN subunit 2 (296 aa).

2 coiled-coil regions span residues 56–83 (DDLI…QGRK) and 253–285 (AVHK…NRRL). The segment at 218–296 (AVSLPTTPGG…WPPSVKKSSV (79 aa)) is disordered. Acidic residues predominate over residues 264 to 277 (QNEEEEEEEEEEDG).

Belongs to the HAUS2 family. As to quaternary structure, part of the augmin complex composed of 8 subunits. The complex acts on microtubules and interacts with gamma-tubulin in spindles and the phragmoplast.

Functionally, contributes to the assembly of the acentrosomal spindle and phragmoplast microtubule arrays as part of the augmin complex. The sequence is that of AUGMIN subunit 2 from Arabidopsis thaliana (Mouse-ear cress).